The following is a 359-amino-acid chain: Dihydroorotate dehydrogenase (quinone) (359 aa).

Residues 65-69 (AGLDK) and threonine 89 each bind FMN. Lysine 69 contacts substrate. 114–118 (NRLGF) provides a ligand contact to substrate. 2 residues coordinate FMN: asparagine 149 and asparagine 182. Asparagine 182 provides a ligand contact to substrate. The Nucleophile role is filled by serine 185. Substrate is bound at residue asparagine 187. Lysine 233 and threonine 261 together coordinate FMN. 262–263 (NT) is a substrate binding site. FMN is bound by residues glycine 284, glycine 313, and 334 to 335 (YT).

This sequence belongs to the dihydroorotate dehydrogenase family. Type 2 subfamily. Monomer. FMN is required as a cofactor.

It is found in the cell membrane. It catalyses the reaction (S)-dihydroorotate + a quinone = orotate + a quinol. The protein operates within pyrimidine metabolism; UMP biosynthesis via de novo pathway; orotate from (S)-dihydroorotate (quinone route): step 1/1. Its function is as follows. Catalyzes the conversion of dihydroorotate to orotate with quinone as electron acceptor. This is Dihydroorotate dehydrogenase (quinone) from Paracidovorax citrulli (strain AAC00-1) (Acidovorax citrulli).